Consider the following 315-residue polypeptide: Glutaminase (315 aa).

Residues serine 70, asparagine 120, glutamate 166, asparagine 173, tyrosine 197, tyrosine 249, and valine 267 each contribute to the substrate site.

It belongs to the glutaminase family. Homotetramer.

It catalyses the reaction L-glutamine + H2O = L-glutamate + NH4(+). This is Glutaminase from Mesorhizobium japonicum (strain LMG 29417 / CECT 9101 / MAFF 303099) (Mesorhizobium loti (strain MAFF 303099)).